The primary structure comprises 170 residues: uncharacterized protein (170 aa).

One can recognise a VOC domain in the interval 25–151 (PALSPHLVVD…FGHHWSLGQP (127 aa)).

This is an uncharacterized protein from Mycobacterium tuberculosis (strain CDC 1551 / Oshkosh).